The following is a 443-amino-acid chain: MEYDDKLVRFRQGHLNPFDKQGGAERHPADSEAQPPKDSSTISPHSIPEYHCPDRVMDLGVSEDHFSRPVGLFLASDIQQLRQAIEECKQEILELPENSDRQKDAVVRLIHLRLKLQELNDPLEDEPNLRILLEHRFYKEKSKSVKHVCDKCSTFIWGLIQTWYTCTGCSYSCHSKCLNLITKPCVRSKVSHQAEYELSICPEAGLDSQDYRCAECRTPISLRAVPSEARQCDYTGQYYCISCHWNDLAVIPARAIHNWDFEPRKVSRCSMRYLALMLGRPVLKLREINPLLFNYVEELVEIRKLRQDILLMKPYFITCKEAMEARLLLQLQDRQHFVENDDMYSLQDLLDISSGRLGCTLTEIHTTFAKHIKLDCERCQAKGFVCELCKEGDILFPFDSHTSVCQDCAAVFHRDCYYDNSTSCPRCMRLSLRKQTQNPEAEP.

Residues M1–E49 are disordered. Phorbol-ester/DAG-type zinc fingers lie at residues E134–C185 and I364–C424.

Belongs to the DEF8 family.

Positively regulates lysosome peripheral distribution and ruffled border formation in osteoclasts. Involved in bone resorption. The protein is Differentially expressed in FDCP 8 homolog A (def8-a) of Xenopus laevis (African clawed frog).